A 437-amino-acid polypeptide reads, in one-letter code: MTKQGNDTQKRFFNDNLQTVDVAIFDAIRGEFERQQHEIELIASENIVSRAVLEAQGSVLTNKYAEGYPGKRYYGGCQFVDVIENLAIERAKKLFGADFANVQANSGSQMNQAVFLALLKPGDTFMGLDLNSGGHLTHGSSVNMSGKWFKSISYGVRKEDQLLDMEAVERLAKEHKPKLIIAGGSAYSRLWDWKKFREIADEIGAYLLVDMSHIAGLVAGGVHPSPVPHAHIVTTTTHKSLRGPRGGLILTNDEILAKKINSAIFPGLQGGPLMHVIAAKAVAFEEALQPVFKDYSANVVANAKTLAKTLQSNGFDIVSGGTDNHLLLVDLRSKKVTGKCAELALGRAHITCNKNSIPFDLETPFITSGIRLGSPAATTRGFAENEFIEIAHMISEILDNLGMAKSDEDNSAVEMVVRKKVEDMTNKFPLYSYLHTC.

Residues Leu-130 and 134-136 (GHL) contribute to the (6S)-5,6,7,8-tetrahydrofolate site. An N6-(pyridoxal phosphate)lysine modification is found at Lys-239. 363–365 (TPF) contacts (6S)-5,6,7,8-tetrahydrofolate.

This sequence belongs to the SHMT family. Homodimer. Requires pyridoxal 5'-phosphate as cofactor.

It localises to the cytoplasm. It carries out the reaction (6R)-5,10-methylene-5,6,7,8-tetrahydrofolate + glycine + H2O = (6S)-5,6,7,8-tetrahydrofolate + L-serine. Its pathway is one-carbon metabolism; tetrahydrofolate interconversion. The protein operates within amino-acid biosynthesis; glycine biosynthesis; glycine from L-serine: step 1/1. Functionally, catalyzes the reversible interconversion of serine and glycine with tetrahydrofolate (THF) serving as the one-carbon carrier. This reaction serves as the major source of one-carbon groups required for the biosynthesis of purines, thymidylate, methionine, and other important biomolecules. Also exhibits THF-independent aldolase activity toward beta-hydroxyamino acids, producing glycine and aldehydes, via a retro-aldol mechanism. This Bartonella henselae (strain ATCC 49882 / DSM 28221 / CCUG 30454 / Houston 1) (Rochalimaea henselae) protein is Serine hydroxymethyltransferase.